A 356-amino-acid chain; its full sequence is Molybdenum import ATP-binding protein ModC (356 aa).

In terms of domain architecture, ABC transporter spans 1-232 (MEDIHARFHI…LDLPIRLGED (232 aa)). 33–40 (GHSGSGKT) is an ATP binding site. The Mop domain maps to 291-356 (ETSVLNLLRG…VQVKSVALME (66 aa)).

This sequence belongs to the ABC transporter superfamily. Molybdate importer (TC 3.A.1.8) family. In terms of assembly, the complex is composed of two ATP-binding proteins (ModC), two transmembrane proteins (ModB) and a solute-binding protein (ModA).

Its subcellular location is the cell inner membrane. The enzyme catalyses molybdate(out) + ATP + H2O = molybdate(in) + ADP + phosphate + H(+). Functionally, part of the ABC transporter complex ModABC involved in molybdenum import. Responsible for energy coupling to the transport system. The protein is Molybdenum import ATP-binding protein ModC of Methylococcus capsulatus (strain ATCC 33009 / NCIMB 11132 / Bath).